The primary structure comprises 132 residues: Small ribosomal subunit protein bS6 (132 aa).

Belongs to the bacterial ribosomal protein bS6 family.

Binds together with bS18 to 16S ribosomal RNA. The protein is Small ribosomal subunit protein bS6 of Chlorobium chlorochromatii (strain CaD3).